The primary structure comprises 339 residues: Anthranilate phosphoribosyltransferase (339 aa).

Residues G81, 84–85, T89, 91–94, 109–117, and T121 contribute to the 5-phospho-alpha-D-ribose 1-diphosphate site; these read GD, NIST, and KHGNRNLSS. G81 is an anthranilate binding site. A Mg(2+)-binding site is contributed by S93. N112 serves as a coordination point for anthranilate. R167 lines the anthranilate pocket. Mg(2+) is bound by residues D226 and E227.

The protein belongs to the anthranilate phosphoribosyltransferase family. In terms of assembly, homodimer. Mg(2+) is required as a cofactor.

The catalysed reaction is N-(5-phospho-beta-D-ribosyl)anthranilate + diphosphate = 5-phospho-alpha-D-ribose 1-diphosphate + anthranilate. It participates in amino-acid biosynthesis; L-tryptophan biosynthesis; L-tryptophan from chorismate: step 2/5. In terms of biological role, catalyzes the transfer of the phosphoribosyl group of 5-phosphorylribose-1-pyrophosphate (PRPP) to anthranilate to yield N-(5'-phosphoribosyl)-anthranilate (PRA). The protein is Anthranilate phosphoribosyltransferase of Ruegeria pomeroyi (strain ATCC 700808 / DSM 15171 / DSS-3) (Silicibacter pomeroyi).